The primary structure comprises 46 residues: Iota-conotoxin-like M11.1 (46 aa).

4 cysteine pairs are disulfide-bonded: cysteine 5–cysteine 19, cysteine 12–cysteine 22, cysteine 18–cysteine 27, and cysteine 21–cysteine 38. Residue methionine 44 is modified to D-methionine. Residue arginine 46 is a propeptide, removed by a carboxypeptidase.

It belongs to the conotoxin I1 superfamily. As to expression, expressed by the venom duct.

Its subcellular location is the secreted. In terms of biological role, iota-conotoxins bind to voltage-gated sodium channels (Nav) and act as agonists by shifting the voltage-dependence of activation to more hyperpolarized levels. Produces general excitatory symptoms. The sequence is that of Iota-conotoxin-like M11.1 from Conus magus (Magical cone).